A 177-amino-acid polypeptide reads, in one-letter code: uncharacterized protein (177 aa).

4 helical membrane passes run 20–42, 62–84, 94–116, and 136–158; these read NLVS…LLAL, VVLW…VSLS, AMSS…GYFI, and GLLY…IIVA.

Its subcellular location is the cell membrane. This is an uncharacterized protein from Methanocaldococcus jannaschii (strain ATCC 43067 / DSM 2661 / JAL-1 / JCM 10045 / NBRC 100440) (Methanococcus jannaschii).